Here is a 564-residue protein sequence, read N- to C-terminus: Zyxin (564 aa).

A2 is subject to N-acetylalanine. The segment at 30-141 (VAPKPKVNPF…TQLPPQPREK (112 aa)) is disordered. 2 stretches are compositionally biased toward pro residues: residues 63–78 (IPPPPPEDFPLPPPPL) and 93–109 (FPPPPPPMIEEPFPPAP). A phosphoserine mark is found at S117, S144, S170, and S171. Residues 162–344 (NDPFKARVSS…RSPGGPGPLT (183 aa)) are disordered. Composition is skewed to pro residues over residues 174–189 (VPPPVATPFVPKPSTK) and 197–214 (PLPPWKTPSSSQPPPQPQ). Phosphothreonine is present on T180. Residues 234–243 (QPVSSANTQP) show a composition bias toward polar residues. An Asymmetric dimethylarginine modification is found at R244. Residues 255–275 (PKFAPVAPKFTPVVSKFSPGA) are compositionally biased toward low complexity. K256 and K263 each carry N6-acetyllysine. The residue at position 265 (T265) is a Phosphothreonine. N6-acetyllysine is present on K270. Phosphoserine occurs at positions 272 and 300. Polar residues predominate over residues 294–310 (SSVSTGSPQPPSFTYAQ). Basic and acidic residues predominate over residues 311-322 (QKEKPLVQEKQH). S336 is subject to Phosphoserine. LIM zinc-binding domains are found at residues 376–435 (CGKC…TLEK), 436–495 (CNTC…YAPR), and 496–562 (CSVC…SARA).

This sequence belongs to the zyxin/ajuba family. In terms of assembly, interacts, via the Pro-rich regions, with the EVH1 domains of ENAH, EVL and VASP. Interacts with the first LIM domain of TES. Interacts with SYNPO2.

Its subcellular location is the cytoplasm. The protein localises to the cytoskeleton. The protein resides in the cell junction. It is found in the focal adhesion. It localises to the nucleus. In terms of biological role, adhesion plaque protein. Binds alpha-actinin and the CRP protein. Important for targeting TES and ENA/VASP family members to focal adhesions and for the formation of actin-rich structures. May be a component of a signal transduction pathway that mediates adhesion-stimulated changes in gene expression. This Mus musculus (Mouse) protein is Zyxin (Zyx).